The sequence spans 198 residues: MSTHLLEQLIDAFRILPGVGQKTAQRMAYHMLEREREGGQRLADVLSRAIEKIGHCTECRDFSETKICAICANSSRDRHQLCVVESPPDRLAIEQATGYRGLYFILQGRLSPLDGIGPHELGLDHLGQRLAAGEVTELIIATNATVEGETTAHYLALLARQHGIRPSRLAQGLPLGGELEYLDRGTLSHAFGTRTEVV.

A C4-type zinc finger spans residues 56-71 (CTECRDFSETKICAIC). In terms of domain architecture, Toprim spans 79 to 174 (HQLCVVESPP…RPSRLAQGLP (96 aa)).

The protein belongs to the RecR family.

May play a role in DNA repair. It seems to be involved in an RecBC-independent recombinational process of DNA repair. It may act with RecF and RecO. This Xylella fastidiosa (strain Temecula1 / ATCC 700964) protein is Recombination protein RecR.